An 886-amino-acid polypeptide reads, in one-letter code: Neurotrophin 1 (886 aa).

The first 29 residues, Met1–Ala29, serve as a signal peptide directing secretion. Residues Asp30–Arg498 constitute a propeptide that is removed on maturation. Asn267 and Asn317 each carry an N-linked (GlcNAc...) asparagine glycan. A disordered region spans residues Phe321–Ser340. An N-linked (GlcNAc...) asparagine glycan is attached at Asn353. The interval Arg369 to Lys436 is disordered. Residues Met508–Val597 form the Spaetzle domain. Disulfide bonds link Cys509–Cys564, Cys546–Cys593, and Cys553–Cys595. Asn623 carries N-linked (GlcNAc...) asparagine glycosylation. Disordered stretches follow at residues Pro675–Arg754 and Val789–Gln886. Positions Tyr698–Ser710 are enriched in low complexity. The span at Pro797–Pro807 shows a compositional bias: pro residues. Basic residues-rich tracts occupy residues His815–His827 and Ser874–Gln886.

Homodimer; disulfide-linked. In terms of tissue distribution, detected in the fan-shaped body which is a component of the locomotion center in the central nervous system (CNS) (at protein level). Expressed in the optic lobes and brain.

Its function is as follows. Neurotrophin which may function as a ligand for the Toll-related receptors Toll-7 and Tollo. Binds to Toll-7 and probably acts as its ligand in promoting motor axon targeting and neuronal survival in the central nervous system (CNS). Involved in synaptic targeting of ISNb/d motorneurons and also some SNa motorneurons. In larvae, involved in the negative regulation of the tracheal immune response to bacterial infection perhaps by acting as a ligand for the Toll-related receptor Tollo. May be involved in the normal development of specific neurons at the neuromuscular junction. This chain is Neurotrophin 1, found in Drosophila melanogaster (Fruit fly).